A 468-amino-acid polypeptide reads, in one-letter code: Interferon-induced protein with tetratricopeptide repeats 2 (468 aa).

Ser-2 bears the N-acetylserine mark. 9 TPR repeats span residues 51–89 (ATMCNILAFVKHRRGQNASALKELEKAEQFIQQQHPDHV), 90–135 (EIRN…RIES), 136–171 (PELDCEEGWARLKCTRNQNERVKVCFEKALEKDPKN), 172–208 (PEFTSGWAISNYRLDFWPAQQNAVDSLKQAIRMSPNS), 242–275 (TDVLRSAARFYYKTHDKDRAIQLLSQALELLPNN), 276–328 (AYVY…MIKD), 329–359 (SCSYLAHLYVLAEQYKEADYYFQKGFKKELT), 360–398 (PGLKQLLHLRYGNFQFFQMKCEDKAIHQYLEGVKIRQKT), and 399–441 (KPKE…ESQQ). Residues 441–468 (QAAKVSERGQDSERPVFSPSLHEGGNEQ) form a disordered region. A compositionally biased stretch (basic and acidic residues) spans 445-454 (VSERGQDSER).

Belongs to the IFIT family. As to quaternary structure, domain-swapped homodimer. Component of an interferon-dependent multiprotein complex, at least composed of IFIT1, IFIT2 and IFIT3. Interacts with IFIT1 and IFIT3. Interacts with STING1/MITA and disrupts its interaction with MAVS or TBK1. Interacts with EIF3E and EIF3C.

It localises to the cytoplasm. The protein localises to the endoplasmic reticulum. IFN-induced antiviral protein which inhibits expression of viral messenger RNAs lacking 2'-O-methylation of the 5' cap. The ribose 2'-O-methylation would provide a molecular signature to distinguish between self and non-self mRNAs by the host during viral infection. Viruses evolved several ways to evade this restriction system such as encoding their own 2'-O-methylase for their mRNAs or by stealing host cap containing the 2'-O-methylation (cap snatching mechanism). Binds AU-rich viral RNAs, with or without 5' triphosphorylation, RNA-binding is required for antiviral activity. Can promote apoptosis. The chain is Interferon-induced protein with tetratricopeptide repeats 2 (IFIT2) from Cricetulus griseus (Chinese hamster).